The following is a 236-amino-acid chain: 5'-methylthioadenosine/S-adenosylhomocysteine nucleosidase (236 aa).

Glu-12 functions as the Proton acceptor in the catalytic mechanism. Residues Gly-78, Ile-153, and 174-175 contribute to the substrate site; that span reads ME. Residue Asp-198 is the Proton donor of the active site.

The protein belongs to the PNP/UDP phosphorylase family. MtnN subfamily.

The catalysed reaction is S-adenosyl-L-homocysteine + H2O = S-(5-deoxy-D-ribos-5-yl)-L-homocysteine + adenine. It catalyses the reaction S-methyl-5'-thioadenosine + H2O = 5-(methylsulfanyl)-D-ribose + adenine. The enzyme catalyses 5'-deoxyadenosine + H2O = 5-deoxy-D-ribose + adenine. Its pathway is amino-acid biosynthesis; L-methionine biosynthesis via salvage pathway; S-methyl-5-thio-alpha-D-ribose 1-phosphate from S-methyl-5'-thioadenosine (hydrolase route): step 1/2. Functionally, catalyzes the irreversible cleavage of the glycosidic bond in both 5'-methylthioadenosine (MTA) and S-adenosylhomocysteine (SAH/AdoHcy) to adenine and the corresponding thioribose, 5'-methylthioribose and S-ribosylhomocysteine, respectively. Also cleaves 5'-deoxyadenosine, a toxic by-product of radical S-adenosylmethionine (SAM) enzymes, into 5-deoxyribose and adenine. The chain is 5'-methylthioadenosine/S-adenosylhomocysteine nucleosidase from Shewanella sp. (strain MR-7).